Consider the following 1416-residue polypeptide: Isonitrile lipopeptide synthase (1416 aa).

The stretch at 188–215 (LRETAKVAEALRRQADAVQRELTAEAGQ) forms a coiled coil. One can recognise a Carrier domain in the interval 965–1028 (RVWSRHLGRP…NLVCDLGSNP (64 aa)). Serine 988 is subject to O-(pantetheine 4'-phosphoryl)serine.

The protein belongs to the ATP-dependent AMP-binding enzyme family. The cofactor is pantetheine 4'-phosphate.

The enzyme catalyses 2 a (3R)-3-isocyanyl-fatty acyl-[ACP] + L-lysine + ATP + 2 NADPH = an isonitrile lipopeptide + 2 holo-[ACP] + AMP + diphosphate + 2 NADP(+). Its function is as follows. Nonribosomal peptide synthetase (NRPS) involved in the biosynthesis of a unique class of isonitrile lipopeptides (INLPs) that seem to play a role in metal acquisition in M.marinum. Catalyzes the final step in the pathway, i.e. the condensation of a (3R)-3-isocyanyl-fatty acyl-[ACP] to both amino groups of a lysine, producing isonitrile lipopeptides. This chain is Isonitrile lipopeptide synthase, found in Mycobacterium marinum (strain ATCC BAA-535 / M).